The sequence spans 354 residues: C-C chemokine receptor type 5 (354 aa).

Over 1 to 32 (MDFQGSVPTYSYDIDYGMSAPCQKINVKQIAA) the chain is Extracellular. Ser-6 carries O-linked (GalNAc...) serine glycosylation. Tyr-10, Tyr-12, and Tyr-16 each carry sulfotyrosine. 2 disulfides stabilise this stretch: Cys-22/Cys-271 and Cys-103/Cys-180. A helical membrane pass occupies residues 33-60 (QLLPPLYSLVFIFGFVGNMMVFLILISC). Residues 61 to 70 (KKLKSVTDIY) lie on the Cytoplasmic side of the membrane. Residues 71–91 (LLNLAISDLLFLLTLPFWAHY) form a helical membrane-spanning segment. The Extracellular segment spans residues 92–104 (AANEWVFGNIMCK). The helical transmembrane segment at 105–126 (VFTGLYHIGYFGGIFFIILLTI) threads the bilayer. The Cytoplasmic segment spans residues 127–143 (DRYLAIVHAVFALKVRT). A helical membrane pass occupies residues 144–168 (VNFGVITSVVTWAVAVFASLPEIIF). The Extracellular portion of the chain corresponds to 169 to 200 (TRSQKEGFHYTCSPHFPHTQYHFWKSFQTLKM). The helical transmembrane segment at 201–220 (VILSLILPLLVMVICYSGIL) threads the bilayer. Residues 221–237 (HTLFRCRNEKKRHRAVR) lie on the Cytoplasmic side of the membrane. A helical membrane pass occupies residues 238–262 (LIFAIMIVYFLFWTPYNIVLLLTTF). Over 263 to 279 (QEFFGLNNCSSSNRLDQ) the chain is Extracellular. Residues 280 to 303 (AMQATETLGMTHCCLNPVIYAFVG) form a helical membrane-spanning segment. Residues 304–354 (EKFRSYLSVFFRKHMVKRFCKRCSIFQQDNPDRASSVYTRSTGEHEVSTGL) are Cytoplasmic-facing. 2 S-palmitoyl cysteine lipidation sites follow: Cys-323 and Cys-326. Phosphoserine; by BARK1 occurs at positions 338, 339, 344, and 351.

This sequence belongs to the G-protein coupled receptor 1 family. As to quaternary structure, interacts with PRAF2. Efficient ligand binding to CCL3/MIP-1alpha and CCL4/MIP-1beta requires sulfation, O-glycosylation and sialic acid modifications. Glycosylation on Ser-6 is required for efficient binding of CCL4. Interacts with GRK2. Interacts with ARRB1 and ARRB2. Interacts with CNIH4. Interacts with S100A4; this interaction stimulates T-lymphocyte chemotaxis. In terms of processing, sulfated on at least 2 of the N-terminal tyrosines. Sulfation is required for efficient binding of the chemokines, CCL3 and CCL4. Post-translationally, O-glycosylated, but not N-glycosylated. Ser-6 appears to be the major site. Also sialylated glycans present which contribute to chemokine binding. Palmitoylation in the C-terminal is important for cell surface expression. In terms of processing, phosphorylation on serine residues in the C-terminal is stimulated by binding CC chemokines especially by APO-RANTES.

It is found in the cell membrane. Its function is as follows. Receptor for a number of inflammatory CC-chemokines including CCL3/MIP-1-alpha, CCL4/MIP-1-beta and RANTES and subsequently transduces a signal by increasing the intracellular calcium ion level. May play a role in the control of granulocytic lineage proliferation or differentiation. Participates in T-lymphocyte migration to the infection site by acting as a chemotactic receptor. The polypeptide is C-C chemokine receptor type 5 (Ccr5) (Mus musculus (Mouse)).